The chain runs to 222 residues: Probable transcriptional regulator ycf29 (222 aa).

A Response regulatory domain is found at 4-120 (KLMLVENDIV…ELLSIINNLI (117 aa)). At aspartate 53 the chain carries 4-aspartylphosphate. Residues 139 to 204 (QLNHKIRLTP…LLVKYSINNN (66 aa)) enclose the HTH luxR-type domain. The segment at residues 163-182 (NKEISTILNTSVRNVEKYVS) is a DNA-binding region (H-T-H motif).

It is found in the plastid. It localises to the chloroplast. The sequence is that of Probable transcriptional regulator ycf29 (ycf29) from Pyropia yezoensis (Susabi-nori).